A 350-amino-acid polypeptide reads, in one-letter code: Phosphotriesterase-related protein (350 aa).

Residues histidine 22, histidine 24, glutamate 169, histidine 201, histidine 230, and aspartate 298 each coordinate a divalent metal cation.

This sequence belongs to the metallo-dependent hydrolases superfamily. Phosphotriesterase family. It depends on a divalent metal cation as a cofactor.

The sequence is that of Phosphotriesterase-related protein from Drosophila grimshawi (Hawaiian fruit fly).